The sequence spans 197 residues: ATP-dependent Clp protease proteolytic subunit (197 aa).

The Nucleophile role is filled by Ser-98. His-123 is an active-site residue.

It belongs to the peptidase S14 family. As to quaternary structure, fourteen ClpP subunits assemble into 2 heptameric rings which stack back to back to give a disk-like structure with a central cavity, resembling the structure of eukaryotic proteasomes.

It is found in the cytoplasm. The catalysed reaction is Hydrolysis of proteins to small peptides in the presence of ATP and magnesium. alpha-casein is the usual test substrate. In the absence of ATP, only oligopeptides shorter than five residues are hydrolyzed (such as succinyl-Leu-Tyr-|-NHMec, and Leu-Tyr-Leu-|-Tyr-Trp, in which cleavage of the -Tyr-|-Leu- and -Tyr-|-Trp bonds also occurs).. Its function is as follows. Cleaves peptides in various proteins in a process that requires ATP hydrolysis. Has a chymotrypsin-like activity. Plays a major role in the degradation of misfolded proteins. This Pediococcus pentosaceus (strain ATCC 25745 / CCUG 21536 / LMG 10740 / 183-1w) protein is ATP-dependent Clp protease proteolytic subunit.